The sequence spans 2641 residues: Inverse autotransporter adhesin YeeJ (2641 aa).

The N-terminal stretch at 1–25 is a signal peptide; the sequence is MGIKLRRLTAGICLITQLVFPMAAA. A LysM domain is found at 50–98; that stretch reads VPYTLGALESAQSVAERFGISVAELRKLNQFRTFARGFDNVRQGDELDV. The tract at residues 125 to 400 is inverse autotransporter; sequence TSQQIGSLLA…SRFDLVDRNN (276 aa). Positions 513–605 are invasin 3 domain; sequence QKDSSVSLSS…GVDAAKAPAV (93 aa). Big-1 domains follow at residues 617 to 711, 721 to 815, 822 to 913, 920 to 1017, 1024 to 1116, 1123 to 1220, 1227 to 1319, 1326 to 1423, 1430 to 1523, 1531 to 1633, 1641 to 1734, 1741 to 1837, 1844 to 1941, 1948 to 2032, 2048 to 2141, 2142 to 2235, and 2244 to 2336; these read HSSI…AGFI, IATL…VSFV, QVDL…VIFI, ALTL…MTFV, VVVL…VNIA, QVTL…VTFV, LVVL…VHFI, IIEL…SINV, HLTL…VTYV, EISL…VNFI, QVNL…VTLI, KLAS…PTEV, ITSL…VIDQ, KLTL…IVKV, and VASF…ITLV. The segment at 2538 to 2641 is C-type lectin domain; sequence KSWWVNAGDA…FAYATCYKNL (104 aa).

The protein belongs to the intimin/invasin family.

Its subcellular location is the cell outer membrane. Functionally, a probable inverse autotransporter, it may be involved in biofilm formation and cell adhesion. May bind peptidoglycan via its LysM domain. This is Inverse autotransporter adhesin YeeJ (yeeJ) from Escherichia coli O157:H7.